The following is a 115-amino-acid chain: uncharacterized protein (115 aa).

The span at 90–100 (THFGRPATRRR) shows a compositional bias: basic residues. Positions 90 to 115 (THFGRPATRRRPLGEREVNPSARSLG) are disordered.

This is an uncharacterized protein from Saccharomyces cerevisiae (strain ATCC 204508 / S288c) (Baker's yeast).